An 83-amino-acid polypeptide reads, in one-letter code: Small ribosomal subunit protein eS21 (83 aa).

The protein belongs to the eukaryotic ribosomal protein eS21 family. In terms of assembly, component of the 40S small ribosomal subunit. Interacts with sta.

Its subcellular location is the cytoplasm. It is found in the cytosol. It localises to the rough endoplasmic reticulum. In terms of biological role, may be an associated component of the ribosome rather than a core structural subunit. May act as a translation initiation factor. Has a role in regulation of cell proliferation in the hematopoietic organs and the imaginal disks of larva. The polypeptide is Small ribosomal subunit protein eS21 (RpS21) (Drosophila grimshawi (Hawaiian fruit fly)).